The sequence spans 97 residues: Acylphosphatase (97 aa).

The region spanning 11–97 (TYYVRVRGTV…EKRYERFEQH (87 aa)) is the Acylphosphatase-like domain. Active-site residues include Arg26 and Asn44. Residues 76 to 97 (RVTEVSGEERSTEKRYERFEQH) are disordered. Positions 82–97 (GEERSTEKRYERFEQH) are enriched in basic and acidic residues.

It belongs to the acylphosphatase family.

The catalysed reaction is an acyl phosphate + H2O = a carboxylate + phosphate + H(+). The sequence is that of Acylphosphatase (acyP) from Paraburkholderia xenovorans (strain LB400).